The primary structure comprises 839 residues: Pre-mRNA-splicing factor syf1 (839 aa).

13 HAT repeats span residues 12–44 (YLIA…YKQQ), 46–78 (GTLY…FRIN), 90–122 (AEYQ…FLLQ), 124–158 (PLVT…FARS), 274–309 (GNFE…FEES), 377–415 (DNKE…FYES), 417–453 (GDLD…MELR), 470–502 (APKK…YVDL), 507–539 (ATLE…LLEE), 541–575 (KYFE…KAVD), 578–612 (IGIE…LEEE), 650–684 (FGLT…MERR), and 686–720 (GEID…FEVQ). Residues 758–839 (QRAQEGARER…IDLDDDMDAE (82 aa)) form a disordered region. Residues 762–782 (EGAREREGEEAGTDASKERAD) show a composition bias toward basic and acidic residues. Residues 830 to 839 (IDLDDDMDAE) are compositionally biased toward acidic residues.

It belongs to the crooked-neck family. In terms of assembly, associated with the spliceosome.

Its subcellular location is the nucleus. In terms of biological role, involved in pre-mRNA splicing and cell cycle progression. In Aspergillus fumigatus (strain ATCC MYA-4609 / CBS 101355 / FGSC A1100 / Af293) (Neosartorya fumigata), this protein is Pre-mRNA-splicing factor syf1 (syf1).